Here is a 1529-residue protein sequence, read N- to C-terminus: uncharacterized protein (1529 aa).

Positions 1-11 (MDKNNNNNNSN) are enriched in low complexity. Disordered regions lie at residues 1–85 (MDKN…SKGV), 335–371 (LLSN…WSSS), 660–694 (LPNL…TATA), 798–843 (NCNI…SSYS), 1016–1035 (SSLP…NTNN), 1334–1364 (QQQQ…QLQQ), and 1454–1497 (QQQV…SRLP). Positions 24-42 (QKRVQNPSFSSGQSRTVPS) are enriched in polar residues. The span at 51 to 79 (ISSSSSSSSISTTNNTTTTTTSGTGSTSS) shows a compositional bias: low complexity. The span at 810 to 833 (NNNNNNNNNNNNNNNNNNNNNNNN) shows a compositional bias: low complexity. Polar residues-rich tracts occupy residues 834-843 (VLPRSNSSYS) and 1016-1027 (SSLPISQNLSDD). The span at 1454–1494 (QQQVQTPSSPQTLASLLGNSSSNTLTSSSSTLSLNESSTLS) shows a compositional bias: low complexity.

This is an uncharacterized protein from Dictyostelium discoideum (Social amoeba).